A 493-amino-acid chain; its full sequence is BICD family-like cargo adapter 2 (493 aa).

Coiled coils occupy residues glutamate 56–methionine 275 and methionine 365–threonine 431.

This sequence belongs to the BICDR family.

The polypeptide is BICD family-like cargo adapter 2 (bicdl2) (Xenopus laevis (African clawed frog)).